The sequence spans 194 residues: Probable GTP-binding protein EngB (194 aa).

The region spanning 22–194 is the EngB-type G domain; that stretch reads LFLEVAFAGR…WQELDTMLNP (173 aa). GTP-binding positions include 30 to 37, 57 to 61, 75 to 78, 142 to 145, and 173 to 175; these read GRSNVGKS, GCTQL, DLPG, TKAD, and FSS. Mg(2+) is bound by residues serine 37 and threonine 59.

The protein belongs to the TRAFAC class TrmE-Era-EngA-EngB-Septin-like GTPase superfamily. EngB GTPase family. Mg(2+) serves as cofactor.

In terms of biological role, necessary for normal cell division and for the maintenance of normal septation. The chain is Probable GTP-binding protein EngB from Desulforapulum autotrophicum (strain ATCC 43914 / DSM 3382 / VKM B-1955 / HRM2) (Desulfobacterium autotrophicum).